We begin with the raw amino-acid sequence, 57 residues long: MAVPKRRMSRSNTRSRRSQWKATATELVNVTVGGQNHKVPRRLLKAARLGLIDLDRR.

Residues 1–19 (MAVPKRRMSRSNTRSRRSQ) are compositionally biased toward basic residues. The tract at residues 1–21 (MAVPKRRMSRSNTRSRRSQWK) is disordered.

This sequence belongs to the bacterial ribosomal protein bL32 family.

The chain is Large ribosomal subunit protein bL32 from Mycobacteroides abscessus (strain ATCC 19977 / DSM 44196 / CCUG 20993 / CIP 104536 / JCM 13569 / NCTC 13031 / TMC 1543 / L948) (Mycobacterium abscessus).